The following is a 121-amino-acid chain: Keratin-associated protein 1-4 (121 aa).

This sequence belongs to the KRTAP type 1 family. Interacts with hair keratins. Expressed in the middle/upper portions of the hair cortex, in the region termed the keratogenous zone.

Functionally, in the hair cortex, hair keratin intermediate filaments are embedded in an interfilamentous matrix, consisting of hair keratin-associated proteins (KRTAP), which are essential for the formation of a rigid and resistant hair shaft through their extensive disulfide bond cross-linking with abundant cysteine residues of hair keratins. The matrix proteins include the high-sulfur and high-glycine-tyrosine keratins. This Homo sapiens (Human) protein is Keratin-associated protein 1-4 (KRTAP1-4).